The primary structure comprises 251 residues: Triosephosphate isomerase (251 aa).

Position 10–12 (10–12 (NWK)) interacts with substrate. Histidine 95 acts as the Electrophile in catalysis. The Proton acceptor role is filled by glutamate 167. Substrate contacts are provided by residues glycine 173, serine 213, and 234–235 (GG).

The protein belongs to the triosephosphate isomerase family. Homodimer.

It is found in the cytoplasm. The catalysed reaction is D-glyceraldehyde 3-phosphate = dihydroxyacetone phosphate. Its pathway is carbohydrate biosynthesis; gluconeogenesis. The protein operates within carbohydrate degradation; glycolysis; D-glyceraldehyde 3-phosphate from glycerone phosphate: step 1/1. Functionally, involved in the gluconeogenesis. Catalyzes stereospecifically the conversion of dihydroxyacetone phosphate (DHAP) to D-glyceraldehyde-3-phosphate (G3P). This chain is Triosephosphate isomerase, found in Acetivibrio thermocellus (strain ATCC 27405 / DSM 1237 / JCM 9322 / NBRC 103400 / NCIMB 10682 / NRRL B-4536 / VPI 7372) (Clostridium thermocellum).